The chain runs to 434 residues: Glutamate-1-semialdehyde 2,1-aminomutase 1 (434 aa).

Lys270 carries the N6-(pyridoxal phosphate)lysine modification.

This sequence belongs to the class-III pyridoxal-phosphate-dependent aminotransferase family. HemL subfamily. As to quaternary structure, homodimer. It depends on pyridoxal 5'-phosphate as a cofactor.

It is found in the cytoplasm. The catalysed reaction is (S)-4-amino-5-oxopentanoate = 5-aminolevulinate. Its pathway is porphyrin-containing compound metabolism; protoporphyrin-IX biosynthesis; 5-aminolevulinate from L-glutamyl-tRNA(Glu): step 2/2. The protein is Glutamate-1-semialdehyde 2,1-aminomutase 1 of Bacillus anthracis (strain A0248).